Consider the following 152-residue polypeptide: Nucleoside diphosphate kinase (152 aa).

Residues lysine 11, phenylalanine 59, arginine 87, threonine 93, arginine 104, and asparagine 114 each coordinate ATP. Histidine 117 (pros-phosphohistidine intermediate) is an active-site residue.

Belongs to the NDK family. Homotetramer. It depends on Mg(2+) as a cofactor.

It is found in the cytoplasm. The catalysed reaction is a 2'-deoxyribonucleoside 5'-diphosphate + ATP = a 2'-deoxyribonucleoside 5'-triphosphate + ADP. It carries out the reaction a ribonucleoside 5'-diphosphate + ATP = a ribonucleoside 5'-triphosphate + ADP. In terms of biological role, major role in the synthesis of nucleoside triphosphates other than ATP. The ATP gamma phosphate is transferred to the NDP beta phosphate via a ping-pong mechanism, using a phosphorylated active-site intermediate. The polypeptide is Nucleoside diphosphate kinase (Prochlorococcus marinus (strain AS9601)).